We begin with the raw amino-acid sequence, 620 residues long: 1-deoxy-D-xylulose-5-phosphate synthase (620 aa).

Residues histidine 75 and alanine 116 to serine 118 contribute to the thiamine diphosphate site. Mg(2+) is bound at residue aspartate 147. Thiamine diphosphate is bound by residues glycine 148–alanine 149, asparagine 177, tyrosine 284, and glutamate 366. A Mg(2+)-binding site is contributed by asparagine 177.

This sequence belongs to the transketolase family. DXPS subfamily. As to quaternary structure, homodimer. Requires Mg(2+) as cofactor. The cofactor is thiamine diphosphate.

It carries out the reaction D-glyceraldehyde 3-phosphate + pyruvate + H(+) = 1-deoxy-D-xylulose 5-phosphate + CO2. The protein operates within metabolic intermediate biosynthesis; 1-deoxy-D-xylulose 5-phosphate biosynthesis; 1-deoxy-D-xylulose 5-phosphate from D-glyceraldehyde 3-phosphate and pyruvate: step 1/1. Catalyzes the acyloin condensation reaction between C atoms 2 and 3 of pyruvate and glyceraldehyde 3-phosphate to yield 1-deoxy-D-xylulose-5-phosphate (DXP). This is 1-deoxy-D-xylulose-5-phosphate synthase from Bordetella pertussis (strain Tohama I / ATCC BAA-589 / NCTC 13251).